Consider the following 425-residue polypeptide: Serine--tRNA ligase (425 aa).

Residue 233–235 coordinates L-serine; sequence TAE. 264–266 lines the ATP pocket; that stretch reads RAE. Glutamate 287 provides a ligand contact to L-serine. 351-354 is an ATP binding site; it reads EISS. Serine 387 provides a ligand contact to L-serine.

This sequence belongs to the class-II aminoacyl-tRNA synthetase family. Type-1 seryl-tRNA synthetase subfamily. As to quaternary structure, homodimer. The tRNA molecule binds across the dimer.

Its subcellular location is the cytoplasm. The catalysed reaction is tRNA(Ser) + L-serine + ATP = L-seryl-tRNA(Ser) + AMP + diphosphate + H(+). The enzyme catalyses tRNA(Sec) + L-serine + ATP = L-seryl-tRNA(Sec) + AMP + diphosphate + H(+). It participates in aminoacyl-tRNA biosynthesis; selenocysteinyl-tRNA(Sec) biosynthesis; L-seryl-tRNA(Sec) from L-serine and tRNA(Sec): step 1/1. In terms of biological role, catalyzes the attachment of serine to tRNA(Ser). Is also able to aminoacylate tRNA(Sec) with serine, to form the misacylated tRNA L-seryl-tRNA(Sec), which will be further converted into selenocysteinyl-tRNA(Sec). The chain is Serine--tRNA ligase from Clostridium perfringens (strain 13 / Type A).